The chain runs to 195 residues: MPYGTRYPTLAFHTGGIGESDDGMPPQPFETFCYDSALLQAKIENFNIVPYTSVLPKELFGNIVPVDQCIKFFKHGAVLEVIMAGRGASTSDGTHAIATGVGICWGQDKNGELIGGWAAEYVEFFPTWINDEIAESHAKMWLKKSLQHELDLRSVVKHSEFQYFHNYINIKQKYGFSLTALGFLNFENADPATIK.

S53 carries the post-translational modification Pyruvic acid (Ser).

Belongs to the pyruvoyl-dependent arginine decarboxylase family. As to quaternary structure, trimer of an alpha-beta dimer. The cofactor is pyruvate.

The protein localises to the cytoplasm. It catalyses the reaction L-arginine + H(+) = agmatine + CO2. Its function is as follows. Part of the AaxABC system, catalyzes the decarboxylation of L-arginine. The arginine uptake by the bacterium in the macrophage may be a virulence factor against the host innate immune response. The polypeptide is Pyruvoyl-dependent arginine decarboxylase AaxB (aaxB) (Chlamydia caviae (strain ATCC VR-813 / DSM 19441 / 03DC25 / GPIC) (Chlamydophila caviae)).